We begin with the raw amino-acid sequence, 108 residues long: U-scoloptoxin(10)-Sm1a (108 aa).

The signal sequence occupies residues 1 to 24; that stretch reads MNKQWLHFFSVLLLCYVIEETCSL.

Belongs to the scoloptoxin-10 family. Contains 3 disulfide bonds. In terms of tissue distribution, expressed by the venom gland.

The protein resides in the secreted. The protein is U-scoloptoxin(10)-Sm1a of Scolopendra morsitans (Tanzanian blue ringleg centipede).